We begin with the raw amino-acid sequence, 239 residues long: DUP240 protein DFP3 (239 aa).

Residues 1–54 (MQPHLDNNSNNDDVKLDTLGEQNVLSSAENITLPEDTFKSYMTYLLYEMAHYKP) are Cytoplasmic-facing. A helical transmembrane segment spans residues 55-75 (MIFSFLALSVSILIVVIFHNV). Residues 76-79 (KACD) lie on the Extracellular side of the membrane. Residues 80-104 (VVFGFSIFVTSILFLSTLIPFNVYI) traverse the membrane as a helical segment. Residues 105 to 239 (SDEGFRIKLL…RKQYPDADIP (135 aa)) lie on the Cytoplasmic side of the membrane.

Belongs to the DUP/COS family. In terms of assembly, interacts according to large scale protein interaction studies with MEC3 and ULP1.

The protein resides in the membrane. The protein is DUP240 protein DFP3 of Saccharomyces cerevisiae (strain ATCC 204508 / S288c) (Baker's yeast).